A 371-amino-acid chain; its full sequence is METVNVNLGKRSYPIYAGPGILQDLGELLGGLPVGRKVLLISNPTVFSLYGEKAAESLARAGFTVAVAEIGDGEEHKTLATAGRLYDRAFEAGLDRRSSIVALGGGVVGDVAGFVAATYMRGISFVQVPTTLLAQVDSSVGGKVAVNHPRGKNIIGAFYQPRLVLADVDTLKTLPVRQMRSGLAEVIKYGVIWSREFFAWLEQNIEALLNGEAGALAYAVRESCRIKAQVVEQDETEQGLRAVLNYGHTVGHAVEALTHYRVYTHGEAVGIGMAVEAGLAVALGMLKRSEGGRIIRLIRQAGLPEGLPEGLPPEKTVEKFYHDKKAVEGQLTFVLPERIGRAVVKNGLAKNFLLEFLSAGYGLLERGAGRV.

Residues 72–77, 106–110, 130–131, Lys-143, Lys-152, and 170–173 each bind NAD(+); these read DGEEHK, GVVGD, TT, and TLKT. Residues Glu-185, His-248, and His-265 each coordinate Zn(2+).

This sequence belongs to the sugar phosphate cyclases superfamily. Dehydroquinate synthase family. Requires Co(2+) as cofactor. Zn(2+) serves as cofactor. NAD(+) is required as a cofactor.

It localises to the cytoplasm. The catalysed reaction is 7-phospho-2-dehydro-3-deoxy-D-arabino-heptonate = 3-dehydroquinate + phosphate. Its pathway is metabolic intermediate biosynthesis; chorismate biosynthesis; chorismate from D-erythrose 4-phosphate and phosphoenolpyruvate: step 2/7. Functionally, catalyzes the conversion of 3-deoxy-D-arabino-heptulosonate 7-phosphate (DAHP) to dehydroquinate (DHQ). In Pelotomaculum thermopropionicum (strain DSM 13744 / JCM 10971 / SI), this protein is 3-dehydroquinate synthase.